Consider the following 667-residue polypeptide: DNA ligase (667 aa).

Residues 32–36 (DSEYD), 81–82 (SL), and Glu110 each bind NAD(+). Lys112 acts as the N6-AMP-lysine intermediate in catalysis. Residues Arg133, Glu167, Lys283, and Lys307 each contribute to the NAD(+) site. Zn(2+) is bound by residues Cys401, Cys404, Cys419, and Cys424. The BRCT domain maps to 586-667 (EGHPEFSGKT…FVDKQNELNS (82 aa)).

It belongs to the NAD-dependent DNA ligase family. LigA subfamily. The cofactor is Mg(2+). It depends on Mn(2+) as a cofactor.

It catalyses the reaction NAD(+) + (deoxyribonucleotide)n-3'-hydroxyl + 5'-phospho-(deoxyribonucleotide)m = (deoxyribonucleotide)n+m + AMP + beta-nicotinamide D-nucleotide.. In terms of biological role, DNA ligase that catalyzes the formation of phosphodiester linkages between 5'-phosphoryl and 3'-hydroxyl groups in double-stranded DNA using NAD as a coenzyme and as the energy source for the reaction. It is essential for DNA replication and repair of damaged DNA. This chain is DNA ligase, found in Staphylococcus aureus (strain USA300).